Consider the following 430-residue polypeptide: Glutamate-1-semialdehyde 2,1-aminomutase 2 (430 aa).

The residue at position 269 (Lys269) is an N6-(pyridoxal phosphate)lysine.

Belongs to the class-III pyridoxal-phosphate-dependent aminotransferase family. HemL subfamily. As to quaternary structure, homodimer. Requires pyridoxal 5'-phosphate as cofactor.

Its subcellular location is the cytoplasm. It carries out the reaction (S)-4-amino-5-oxopentanoate = 5-aminolevulinate. It functions in the pathway porphyrin-containing compound metabolism; protoporphyrin-IX biosynthesis; 5-aminolevulinate from L-glutamyl-tRNA(Glu): step 2/2. The polypeptide is Glutamate-1-semialdehyde 2,1-aminomutase 2 (Lysinibacillus sphaericus (strain C3-41)).